Reading from the N-terminus, the 1663-residue chain is Cortactin-binding protein 2 (1663 aa).

5 disordered regions span residues 1-23 (MATDGASCEPDLSRAPEDAAGAA), 203-222 (KKKTNELEEELSAEKRRSTE), 358-440 (RQAS…LHPG), 454-479 (GNANDPDQNGNTTQSPPSRDMSPTSR), and 498-616 (RFTS…PKPS). Residues 119–276 (KKMQERMSAQ…EQLKRGSDSK (158 aa)) are a coiled coil. The span at 386 to 396 (PSTDSTPDPTS) shows a compositional bias: low complexity. A compositionally biased stretch (polar residues) spans 411 to 422 (QTPGIAPQNSQA). Arg498 is modified (asymmetric dimethylarginine). Over residues 583 to 597 (TVASPPSSLPQGNRV) the composition is skewed to polar residues. 6 ANK repeats span residues 709–739 (GRPTLLQQAAAQGNVTLLSMLLNEEGLDINY), 743–772 (DGHSALYSAAKNGHTDCVRLLLSAEAQINA), 776–805 (NGFTPLCAAAAQGHFECVELLIAYDANINH), 809–838 (GGQTPLYLACKNENKECIKLLLEAGTNRSV), 842–871 (DGWTPVHAAVDTGNVDSLKLLMYHRIPACG), and 912–942 (EGWTAAHIAASKGFKNCLEILCRHGGLEPER). Residues 1447-1477 (KKKGESGAWRKVNTSPRRKSGRFSLPTWNKP) are disordered. Ser1524 is modified (phosphoserine). Disordered stretches follow at residues 1581 to 1602 (QKEVSPLSSHQTTECSNSKSKT) and 1618 to 1663 (SKVT…KHNK). Polar residues predominate over residues 1582–1599 (KEVSPLSSHQTTECSNSK). Residues 1624–1638 (SQNTKRSSSSSNTRQ) show a composition bias toward low complexity. The span at 1645–1663 (SKEENWNLHKNEHLDKHNK) shows a compositional bias: basic and acidic residues.

Interacts with CTTN/cortactin SH3 domain. Interacts with STRN, STRN4/zinedin and MOB4/phocein; this interactions mediate the association with the STRIPAK core complex and may regulate dendritic spine distribution of the STRIPAK complex in hippocampal neurons. Activation of glutamate receptors weakens the interaction with STRN and STRN4.

It is found in the cytoplasm. Its subcellular location is the cell cortex. The protein localises to the cell projection. The protein resides in the dendritic spine. Functionally, regulates the dendritic spine distribution of CTTN/cortactin in hippocampal neurons, and thus controls dendritic spinogenesis and dendritic spine maintenance. Associates with the striatin-interacting phosphatase and kinase (STRIPAK) core complex to regulate dendritic spine distribution of the STRIPAK complex in hippocampal neurons. The polypeptide is Cortactin-binding protein 2 (CTTNBP2) (Papio anubis (Olive baboon)).